Reading from the N-terminus, the 108-residue chain is DNA-directed RNA polymerase III subunit RPC10 (108 aa).

Positions 5, 8, 25, 28, 69, and 72 each coordinate Zn(2+). A C4-type zinc finger spans residues 5-28 (CPGCGNGLIVEEGQRCHRFACNTC). The TFIIS-type zinc finger occupies 65-107 (TAEPCPKCEHPRAYFMQLQTRSADEPMTTFYKCCNAQCGHRWR). The short motif at 88-89 (DE) is the Hairpin element. Residues cysteine 98 and cysteine 102 each coordinate Zn(2+).

It belongs to the archaeal RpoM/eukaryotic RPA12/RPB9/RPC11 RNA polymerase family. In terms of assembly, component of the RNA polymerase III complex consisting of 17 subunits: a ten-subunit horseshoe-shaped catalytic core composed of POLR3A/RPC1, POLR3B/RPC2, POLR1C/RPAC1, POLR1D/RPAC2, POLR3K/RPC10, POLR2E/RPABC1, POLR2F/RPABC2, POLR2H/RPABC3, POLR2K/RPABC4 and POLR2L/RPABC5; a mobile stalk composed of two subunits POLR3H/RPC8 and CRCP/RPC9, protruding from the core and functioning primarily in transcription initiation; and additional subunits homologous to general transcription factors of the RNA polymerase II machinery, POLR3C/RPC3-POLR3F/RPC6-POLR3G/RPC7 heterotrimer required for transcription initiation and POLR3D/RPC4-POLR3E/RPC5 heterodimer involved in both transcription initiation and termination.

The protein resides in the nucleus. Core component of RNA polymerase III (Pol III) which synthesizes small non-coding RNAs using the four ribonucleoside triphosphates as substrates. Can mediate Pol I proofreading of the nascent RNA transcript. Anchors into the Pol III active site to constantly monitor transcription fidelity, cleaves mis-incorporated 5'-ribonucleotides and restarts the transcription process. Once Pol III reaches the poly(dT) termination signal, can induce Pol III clamp opening and transcription termination. Pol III plays an important role in sensing and limiting infection by intracellular bacteria and DNA viruses. Acts as a nuclear and cytosolic DNA sensor involved in innate immune response. Can sense non-self dsDNA that serves as template for transcription into dsRNA. The non-self RNA polymerase III transcripts, such as Epstein-Barr virus-encoded RNAs (EBERs) induce type I interferon and NF-kappa-B through the RIG-I pathway. In Mus musculus (Mouse), this protein is DNA-directed RNA polymerase III subunit RPC10.